The chain runs to 362 residues: Chorismate synthase (362 aa).

Residue Arg47 coordinates NADP(+). Residues Arg124–Ser126, Gly286, Lys301–Thr305, and Arg327 contribute to the FMN site.

It belongs to the chorismate synthase family. In terms of assembly, homotetramer. FMNH2 serves as cofactor.

It carries out the reaction 5-O-(1-carboxyvinyl)-3-phosphoshikimate = chorismate + phosphate. It functions in the pathway metabolic intermediate biosynthesis; chorismate biosynthesis; chorismate from D-erythrose 4-phosphate and phosphoenolpyruvate: step 7/7. Its function is as follows. Catalyzes the anti-1,4-elimination of the C-3 phosphate and the C-6 proR hydrogen from 5-enolpyruvylshikimate-3-phosphate (EPSP) to yield chorismate, which is the branch point compound that serves as the starting substrate for the three terminal pathways of aromatic amino acid biosynthesis. This reaction introduces a second double bond into the aromatic ring system. The chain is Chorismate synthase from Synechococcus elongatus (strain ATCC 33912 / PCC 7942 / FACHB-805) (Anacystis nidulans R2).